A 63-amino-acid chain; its full sequence is Large ribosomal subunit protein uL29 (63 aa).

Belongs to the universal ribosomal protein uL29 family.

The protein is Large ribosomal subunit protein uL29 of Bordetella avium (strain 197N).